A 919-amino-acid chain; its full sequence is GPI ethanolamine phosphate transferase 1 (919 aa).

Residues 1 to 9 are Cytoplasmic-facing; the sequence is MWNKTRTTL. The helical transmembrane segment at 10–30 threads the bilayer; it reads LAVGVLFHLFYLWSIFDIYFI. At 31 to 457 the chain is on the lumenal side; sequence SPLVHGMSPY…TTYNWRFIRT (427 aa). 6 N-linked (GlcNAc...) asparagine glycosylation sites follow: Asn-90, Asn-138, Asn-198, Asn-202, Asn-286, and Asn-312. A helical membrane pass occupies residues 458-478; sequence IVTFGFVGWIFFSFIIFLKSF. Residues 479-488 are Cytoplasmic-facing; that stretch reads ILENVIDDQK. Residues 489–509 traverse the membrane as a helical segment; it reads ASPLSHAVFGSIGILLNWILF. The Lumenal segment spans residues 510–512; it reads YQH. Residues 513–533 traverse the membrane as a helical segment; it reads SPFNFYMYLLFPLYFWSYIFT. At 534–553 the chain is on the cytoplasmic side; sequence NRSVLRSGIKEFFKGTSPWK. Residues 554-574 form a helical membrane-spanning segment; it reads RVLITISIISVYEGIVYGFFH. Over 575-576 the chain is Lumenal; sequence RW. Residues 577 to 597 form a helical membrane-spanning segment; that stretch reads TFTLITNILAFYPFICGVREL. Position 598 (Ser-598) is a topological domain, cytoplasmic. The helical transmembrane segment at 599 to 619 threads the bilayer; that stretch reads VNILWIITSVLLSTFTLFDAV. Topologically, residues 620–626 are lumenal; it reads KIEDLNQ. A helical transmembrane segment spans residues 627–647; that stretch reads IHLAGLLIILSAFYALYKIHS. Over 648–655 the chain is Cytoplasmic; the sequence is RINSYTRA. Residues 656–676 traverse the membrane as a helical segment; the sequence is IFAIQISLVAAMLAVTHRSVI. Topologically, residues 677 to 687 are lumenal; that stretch reads SLQLRQGLPRE. A helical membrane pass occupies residues 688–708; the sequence is SQVAGWIIFFVSLFVMPILHY. The Cytoplasmic segment spans residues 709-720; it reads RKPNNDYKVRLL. A helical transmembrane segment spans residues 721 to 741; that stretch reads IIYLTFAPSFIILTISFESLF. The Lumenal portion of the chain corresponds to 742 to 776; sequence YFLFTSYMVQWIEIENKIKEMKTQKDENWLQVLRV. The helical transmembrane segment at 777 to 797 threads the bilayer; the sequence is SVIGFFLLQVAFFGTGNVASI. Residues 798–807 are Cytoplasmic-facing; the sequence is SSFSLESVCR. Residues 808–828 form a helical membrane-spanning segment; that stretch reads LLPIFDPFLMGALLMLKLIIP. The Lumenal segment spans residues 829–848; the sequence is YGLLSTCLGILNLKLNFKDY. A helical transmembrane segment spans residues 849-869; that stretch reads TISSLIISMSDILSLNFFYLL. The Cytoplasmic segment spans residues 870-885; sequence RTEGSWLDIGITISNY. The chain crosses the membrane as a helical span at residues 886-906; that stretch reads CLAILSSLFMLILEVLGHVLL. Residues 907–919 lie on the Lumenal side of the membrane; sequence KNVIIQDKTKKTQ.

Belongs to the PIGG/PIGN/PIGO family. PIGN subfamily. Interacts with CSF1; CSF1 channels phosphatidylethanolamine to MCD4 in the endoplasmic reticulum at contact sites to support GPI anchor biosynthesis. N-glycosylated.

The protein resides in the endoplasmic reticulum membrane. The protein localises to the golgi apparatus membrane. Its subcellular location is the vacuole membrane. Its pathway is glycolipid biosynthesis; glycosylphosphatidylinositol-anchor biosynthesis. Functionally, ethanolamine phosphate transferase involved in glycosylphosphatidylinositol-anchor biosynthesis. Transfers ethanolamine phosphate to the first alpha-1,4-linked mannose of the glycosylphosphatidylinositol precursor of GPI-anchor. Ethanolamine phosphate on the alpha-1,4-linked mannose is essential for further mannosylation by GPI10 and is necessary for an efficient recognition of GPI lipids and GPI proteins by the GPI transamidase, for the efficient transport of GPI anchored proteins from endoplasmic reticulum to Golgi and for the physiological incorporation of ceramides into GPI anchors by lipid remodeling. Also involved in non-mitochondrial ATP movements across membrane and participates in Golgi and endoplasmic reticulum function, Also required for the incorporation of BGL2 into the cell wall. The chain is GPI ethanolamine phosphate transferase 1 (MCD4) from Saccharomyces cerevisiae (strain ATCC 204508 / S288c) (Baker's yeast).